Here is a 952-residue protein sequence, read N- to C-terminus: Leucine--tRNA ligase (952 aa).

The 'HIGH' region motif lies at 66–77 (PYPSGAGLHVGH). The 'KMSKS' region signature appears at 722–726 (KMGKS). Residue Lys-725 participates in ATP binding.

The protein belongs to the class-I aminoacyl-tRNA synthetase family.

It localises to the cytoplasm. The enzyme catalyses tRNA(Leu) + L-leucine + ATP = L-leucyl-tRNA(Leu) + AMP + diphosphate. The polypeptide is Leucine--tRNA ligase (Corynebacterium glutamicum (strain ATCC 13032 / DSM 20300 / JCM 1318 / BCRC 11384 / CCUG 27702 / LMG 3730 / NBRC 12168 / NCIMB 10025 / NRRL B-2784 / 534)).